Reading from the N-terminus, the 1024-residue chain is Gamma-tubulin complex component 5 (1024 aa).

Disordered regions lie at residues Ile-153–Gln-203, Asn-523–Gln-545, and Ser-853–Lys-873. Positions Thr-189–Arg-198 are enriched in basic and acidic residues. Low complexity predominate over residues Asp-529 to Ser-543. Residues Ser-853–Asp-864 are compositionally biased toward basic and acidic residues.

The protein belongs to the TUBGCP family. In terms of assembly, component of the gamma-tubulin ring complex (gTuRC) consisting of TUBGCP2, TUBGCP3, TUBGCP4, TUBGCP5 and TUBGCP6 and gamma-tubulin TUBG1 or TUBG2. TUBGCP2, TUBGCP3, TUBGCP4, TUBGCP5 and TUBGCP6 assemble in a 5:5:2:1:1 stoichiometry; each is associated with a gamma-tubulin, thereby arranging 14 gamma-tubulins in a helical manner. Gamma-tubulin at the first position is blocked by TUBGCP3 at the last position, allowing 13 protafilaments to grow into a microtubule. The gTuRC (via TUBGCP3 and TUBGCP6) interacts with ACTB and MZT1; the interactions form a luminal bridge that stabilizes the initial structure during complex assembly. The gTuRC (via TUBGCP2) interacts with MZT2A/MZT2B and CDK5RAP2 (via CM1 motif); the interactions play a role in gTuRC activation.

It localises to the cytoplasm. The protein resides in the cytoskeleton. It is found in the microtubule organizing center. Its subcellular location is the centrosome. Functionally, component of the gamma-tubulin ring complex (gTuRC) which mediates microtubule nucleation. The gTuRC regulates the minus-end nucleation of alpha-beta tubulin heterodimers that grow into microtubule protafilaments, a critical step in centrosome duplication and spindle formation. In Mus musculus (Mouse), this protein is Gamma-tubulin complex component 5 (Tubgcp5).